Consider the following 185-residue polypeptide: Putative manganese efflux pump MntP (185 aa).

The next 6 membrane-spanning stretches (helical) occupy residues 3-23 (PFAV…VSVG), 41-61 (AVFG…GVAA), 70-90 (HWLA…AAVW), 101-121 (SFTV…AVGV), 123-143 (LAFL…ATFL), and 165-185 (AVAG…HLTA).

The protein belongs to the MntP (TC 9.B.29) family.

It localises to the cell inner membrane. Its function is as follows. Probably functions as a manganese efflux pump. In Bradyrhizobium sp. (strain BTAi1 / ATCC BAA-1182), this protein is Putative manganese efflux pump MntP.